The chain runs to 856 residues: Structure-specific endonuclease subunit SLX4 (856 aa).

Over residues 1–19 (MDNAAIASQSNTPPSNGRS) the composition is skewed to polar residues. Disordered stretches follow at residues 1–24 (MDNA…ARFV), 39–61 (IEPS…SKSP), 88–121 (VDSP…HKMA), 139–201 (KTRK…TDNE), 296–326 (GIQT…KKPQ), 362–392 (KKMG…GNGP), 621–640 (SKSS…SQGD), 653–688 (RSDS…SNEG), and 715–742 (DSVG…QDCD). The segment covering 51–60 (STLLTSLSKS) has biased composition (low complexity). The segment covering 139 to 152 (KTRKKKAATAKRTR) has biased composition (basic residues). A compositionally biased stretch (polar residues) spans 296–309 (GIQTPTESRPATND). A compositionally biased stretch (polar residues) spans 673 to 686 (SVKSQESKSFSLSN).

Belongs to the SLX4 family. Forms a heterodimer with SLX1. Post-translationally, phosphorylated in response to DNA damage.

It is found in the nucleus. Regulatory subunit of the SLX1-SLX4 structure-specific endonuclease that resolves DNA secondary structures generated during DNA repair and recombination. Has endonuclease activity towards branched DNA substrates, introducing single-strand cuts in duplex DNA close to junctions with ss-DNA. The protein is Structure-specific endonuclease subunit SLX4 of Ajellomyces dermatitidis (strain ER-3 / ATCC MYA-2586) (Blastomyces dermatitidis).